A 498-amino-acid chain; its full sequence is POU domain protein 2, isoform A (498 aa).

Positions 1–30 are enriched in low complexity; that stretch reads MMVLQQQQQQRLWDATTTSNTNTQTQQSAN. The disordered stretch occupies residues 1-35; it reads MMVLQQQQQQRLWDATTTSNTNTQTQQSANVESTP. Ser-72, Ser-211, Ser-215, Ser-217, and Ser-219 each carry phosphoserine. The tract at residues 191 to 273 is disordered; sequence QMKQQQREDP…STPKPTSGLT (83 aa). Positions 207-222 are enriched in low complexity; sequence PLAKSPLRSPSLSPVP. Over residues 228 to 251 the composition is skewed to polar residues; sequence QQRTPPNSMTANSLGMSSAVMTPN. The span at 252 to 270 shows a compositional bias: low complexity; that stretch reads TPSMQQQPQLQQSTPKPTS. One can recognise a POU-specific domain in the interval 286–360; sequence EETTDLEELE…LLQKWLEDAD (75 aa). Residues 391–450 constitute a DNA-binding region (homeobox); sequence RRKKRTSIETTVRTTLEKAFLMNCKPTSEEISQLSERLNMDKEVIRVWFCNRRQKEKRIN.

The protein belongs to the POU transcription factor family. Class-2 subfamily. In terms of tissue distribution, initial expression in cellular blastoderm stage, then in ectodermal stripes during germband extension. Broad expression in the neuroectoderm followed by limitation to discrete subsets of CNS cells, and expression in specific PNS neurons and support cells.

It is found in the nucleus. DNA-binding regulatory protein implicated in early development. Involved in neuronal cell fate decision. May act as an octamer-dependent activator of transcription. Could also play an early role in specific ectodermal cells, and a subsequent role in the embryonic nervous system. The polypeptide is POU domain protein 2, isoform A (pdm2) (Drosophila melanogaster (Fruit fly)).